The following is a 355-amino-acid chain: Serine acetyltransferase 4 (355 aa).

The protein belongs to the transferase hexapeptide repeat family. Homomultimer. As to expression, localized in vascular tissues, particularly in phloem.

It is found in the cytoplasm. The enzyme catalyses L-serine + acetyl-CoA = O-acetyl-L-serine + CoA. It functions in the pathway amino-acid biosynthesis; L-cysteine biosynthesis; L-cysteine from L-serine: step 1/2. Its activity is regulated as follows. Feedback inhibitions by L-Ser and acetyl-CoA. This chain is Serine acetyltransferase 4, found in Arabidopsis thaliana (Mouse-ear cress).